A 445-amino-acid chain; its full sequence is Proline--tRNA ligase (445 aa).

This sequence belongs to the class-II aminoacyl-tRNA synthetase family. ProS type 2 subfamily. In terms of assembly, homodimer.

The protein localises to the cytoplasm. The enzyme catalyses tRNA(Pro) + L-proline + ATP = L-prolyl-tRNA(Pro) + AMP + diphosphate. Functionally, catalyzes the attachment of proline to tRNA(Pro) in a two-step reaction: proline is first activated by ATP to form Pro-AMP and then transferred to the acceptor end of tRNA(Pro). The polypeptide is Proline--tRNA ligase (Dinoroseobacter shibae (strain DSM 16493 / NCIMB 14021 / DFL 12)).